The chain runs to 244 residues: Salivary antigen-5 (244 aa).

The signal sequence occupies residues 1 to 23 (MAKAHSSLVFCLLALALVRFAQA). The region spanning 46–202 (LDFHNKFREL…WYTGYLVCNY (157 aa)) is the SCP domain. Residues asparagine 106 and asparagine 172 are each glycosylated (N-linked (GlcNAc...) asparagine).

This sequence belongs to the CRISP family. Venom allergen 5-like subfamily. As to expression, salivary gland (at protein level).

The protein resides in the secreted. Inhibits host platelet aggregation induced by low doses of collagen. The polypeptide is Salivary antigen-5 (Triatoma infestans (Assassin bug)).